Consider the following 101-residue polypeptide: Acid shock protein (101 aa).

Positions 1-21 (MKKVLALVVAAAMGLSSAAFA) are cleaved as a signal peptide. Positions 22 to 59 (AETTATAAPAASTAAPAKTVHHKKHHKAAKPAAEQKAQ) are excised as a propeptide. Positions 26 to 39 (ATAAPAASTAAPAK) are enriched in low complexity. The disordered stretch occupies residues 26–101 (ATAAPAASTA…AAKPAAQPAA (76 aa)). Composition is skewed to basic residues over residues 40-50 (TVHHKKHHKAA), 60-69 (AAKKHHKKAA), and 79-88 (AAKKHHKKAA).

It belongs to the Asr family. In terms of processing, proteolytic processing gives rise to the active protein.

Its subcellular location is the periplasm. Required for growth and/or survival at acidic conditions. This Enterobacter cloacae protein is Acid shock protein (asr).